Consider the following 95-residue polypeptide: MTITKAKIAAMLSSKLGFSNNLCEEIVHTVFSNILEIAKEQKLTLKNFGSFEVKQKNPRPGINFHTKAPVIIESKKHLRFVPSSKLKALINESTR.

This sequence belongs to the bacterial histone-like protein family.

In Rickettsia conorii (strain ATCC VR-613 / Malish 7), this protein is Histone-like DNA-binding protein.